Reading from the N-terminus, the 209-residue chain is Regulator of G-protein signaling 1 (209 aa).

The segment at 18–42 (FFSASPKDSKEPSHSLLDDNKQKKR) is disordered. Residues 24–38 (KDSKEPSHSLLDDNK) are compositionally biased toward basic and acidic residues. The RGS domain occupies 85-200 (SLEKLLANQM…LKSNIYLNLL (116 aa)).

In terms of assembly, interacts with GNAI1 and GNAQ. As to expression, expressed in multiple tissues.

The protein resides in the cell membrane. Its subcellular location is the cytoplasm. The protein localises to the cytosol. Its function is as follows. Regulates G protein-coupled receptor signaling cascades, including signaling downstream of the N-formylpeptide chemoattractant receptors and leukotriene receptors. Inhibits B cell chemotaxis toward CXCL12. Inhibits signal transduction by increasing the GTPase activity of G protein alpha subunits, thereby driving them into their inactive GDP-bound form. The sequence is that of Regulator of G-protein signaling 1 (Rgs1) from Rattus norvegicus (Rat).